Consider the following 379-residue polypeptide: MSNEIKSISSSNSSCPPNEARSGERDKALSLVLGQIERNFGKGSIMRLGDASKMRVETISTGALTLDLALGGGYPKGRVVEVYGPESSGKTTLTLHAIAEVQKRGGVAAFVDAEHALDPVYAASLGVDIENLLVSQPDTGEMALEIVDQLIRSSAVDLVVVDSVAALTPRSEIEGEMGDHAVGSQARLMSQAMRKITGNIGKSGCTVIFLNQLRLKIGVTYGNPETTTGGNALKFYASVRLDIRRIQTLKRGTEEYGIRAKVKVAKNKVAPPFRIAEFDILFGKGISTLGCLLDMAEETNIVTRKGAWYSYEGDNIGQGRDNTITWLEENSEAKEKIEKLVRQKLTEGSEVSANSMKPLASAARAANTPPVMKKISNAA.

Residues 1–14 (MSNEIKSISSSNSS) show a composition bias toward low complexity. Residues 1–24 (MSNEIKSISSSNSSCPPNEARSGE) are disordered. ATP is bound at residue 84-91 (GPESSGKT).

Belongs to the RecA family.

It localises to the cytoplasm. Its function is as follows. Can catalyze the hydrolysis of ATP in the presence of single-stranded DNA, the ATP-dependent uptake of single-stranded DNA by duplex DNA, and the ATP-dependent hybridization of homologous single-stranded DNAs. It interacts with LexA causing its activation and leading to its autocatalytic cleavage. The polypeptide is Protein RecA (Prochlorococcus marinus (strain SARG / CCMP1375 / SS120)).